The primary structure comprises 335 residues: L-carnitine dehydrogenase (335 aa).

29 to 34 provides a ligand contact to NAD(+); that stretch reads GTGVIG.

The protein belongs to the 3-hydroxyacyl-CoA dehydrogenase family. L-carnitine dehydrogenase subfamily. In terms of assembly, homodimer.

It localises to the cytoplasm. It catalyses the reaction carnitine + NAD(+) = 3-dehydrocarnitine + NADH + H(+). Its pathway is amine and polyamine metabolism; carnitine metabolism. Catalyzes the NAD(+)-dependent oxidation of L-carnitine to 3-dehydrocarnitine. The chain is L-carnitine dehydrogenase from Streptomyces griseus subsp. griseus (strain JCM 4626 / CBS 651.72 / NBRC 13350 / KCC S-0626 / ISP 5235).